The primary structure comprises 692 residues: MVQSELQLQPRAGGRAEAASWGDRGNDKGGFGNPDMPSVSPGPQRPPKLSSLAYDSPPDYLQTVSHPEAYRVLFDYQPEAPDELTLRRGDVVKVLSKTTEDKGWWEGECQGRRGVFPDNFVLPPPPIKKLVPRKVVSRQSAPIKEPKKLMPKTSLPTVKKLATAATGPSKAKTSRTPSRDSQKLTSRDSGPNGGFQSGGSCPPGRKRSKTQTPQQRSVSSQEEEHSSPAKAPSVKRTPMLDKTTTPERPPAPENAPGSKKIPVPDKVPSPEKTLTLGDKASIPGNSTSGKIPGPDIVPTPERMVTPEDKASIPENSIPEEALTVDKPSTPERLSSVEEASGPEVPPMDKVPDPKMAPLGDEAPTREKVLTPELSEEEVSTRDDTQFHHFSSEEALQKVKSFVAKEAPSSQEKAHTPEAPPLQPPSSEKCLGEMKCPLVRGDSSPHQAELKSGPASRPALEKPHPQAEATTLLEEAPSKEERTPEEEASPNEERLLRGEVLPKEGVASKGEVLPKEGVASKGEVLPKEGVASKEVLPKGGVASKEEVLPKEGVASKEEMLPKEGVASKEEVTLKEEVAPKEEVPPIDTAFAQKTHPIKPSPDSQETLTLPSLLPQNYTENKNEGVDVTSLRGEVESLRRALELMGVQLERKLTDIWEELKSEKEQRQRLEVQVMQGTQKSQTPRIIHAQTQTY.

The tract at residues 1–60 (MVQSELQLQPRAGGRAEAASWGDRGNDKGGFGNPDMPSVSPGPQRPPKLSSLAYDSPPDY) is disordered. In terms of domain architecture, SH3 spans 65 to 126 (SHPEAYRVLF…PDNFVLPPPP (62 aa)). 3 disordered regions span residues 132–501 (PRKV…EVLP), 536–605 (PKGG…SQET), and 672–692 (VMQGTQKSQTPRIIHAQTQTY). Positions 177 to 186 (PSRDSQKLTS) are enriched in basic and acidic residues. Over residues 210–220 (TQTPQQRSVSS) the composition is skewed to polar residues. Composition is skewed to basic and acidic residues over residues 378 to 396 (VSTRDDTQFHHFSSEEALQ), 490 to 501 (NEERLLRGEVLP), and 542 to 582 (SKEE…KEEV). A coiled-coil region spans residues 628–678 (SLRGEVESLRRALELMGVQLERKLTDIWEELKSEKEQRQRLEVQVMQGTQK). A compositionally biased stretch (polar residues) spans 673-692 (MQGTQKSQTPRIIHAQTQTY).

This is SH3 domain-containing protein 21 (SH3D21) from Macaca fascicularis (Crab-eating macaque).